The sequence spans 65 residues: Temporin-LK1 (65 aa).

The N-terminal stretch at 1–22 (MFTMKKSLLLLFFLGAINLPLC) is a signal peptide. A propeptide spanning residues 23–44 (QEERNAEEERRDGDDEGSVEVQ) is cleaved from the precursor. Phenylalanine 63 is subject to Phenylalanine amide.

Expressed by the skin glands.

Its subcellular location is the secreted. In terms of biological role, has antimicrobial activity against Gram-positive bacteria S.aureus ATCC 2592 (MIC=2.5 uM), S.aureus ATCC 43300 (MIC=2.5 uM) and B.subtilis (MIC=15.0 uM), against Gram-negative bacteria E.coli ML-35P (MIC=30.0 uM), P.aeruginosa PA01 (MIC=2.5 uM) and P.aeruginosa ATCC 27853 (MIC=2.5 uM) and against fungus C.albicans ATCC 2002 (MIC=5.0 uM). The sequence is that of Temporin-LK1 from Limnonectes kuhlii (Kuhl's Creek frog).